The sequence spans 192 residues: LOB domain-containing protein 32 (192 aa).

In terms of domain architecture, LOB spans 4–105 (NRCAVCKILN…QDIESAVNEL (102 aa)).

Belongs to the LOB domain-containing protein family.

This Arabidopsis thaliana (Mouse-ear cress) protein is LOB domain-containing protein 32 (LBD32).